A 472-amino-acid polypeptide reads, in one-letter code: ATP synthase subunit beta (472 aa).

Glycine 156–threonine 163 serves as a coordination point for ATP.

The protein belongs to the ATPase alpha/beta chains family. In terms of assembly, F-type ATPases have 2 components, CF(1) - the catalytic core - and CF(0) - the membrane proton channel. CF(1) has five subunits: alpha(3), beta(3), gamma(1), delta(1), epsilon(1). CF(0) has three main subunits: a(1), b(2) and c(9-12). The alpha and beta chains form an alternating ring which encloses part of the gamma chain. CF(1) is attached to CF(0) by a central stalk formed by the gamma and epsilon chains, while a peripheral stalk is formed by the delta and b chains.

Its subcellular location is the cell membrane. It carries out the reaction ATP + H2O + 4 H(+)(in) = ADP + phosphate + 5 H(+)(out). Its function is as follows. Produces ATP from ADP in the presence of a proton gradient across the membrane. The catalytic sites are hosted primarily by the beta subunits. The protein is ATP synthase subunit beta of Symbiobacterium thermophilum (strain DSM 24528 / JCM 14929 / IAM 14863 / T).